The sequence spans 621 residues: 1,4-alpha-glucan branching enzyme GlgB (621 aa).

The active-site Nucleophile is Asp-302. Catalysis depends on Glu-355, which acts as the Proton donor.

Belongs to the glycosyl hydrolase 13 family. GlgB subfamily. In terms of assembly, monomer.

The catalysed reaction is Transfers a segment of a (1-&gt;4)-alpha-D-glucan chain to a primary hydroxy group in a similar glucan chain.. It functions in the pathway glycan biosynthesis; glycogen biosynthesis. Functionally, catalyzes the formation of the alpha-1,6-glucosidic linkages in glycogen by scission of a 1,4-alpha-linked oligosaccharide from growing alpha-1,4-glucan chains and the subsequent attachment of the oligosaccharide to the alpha-1,6 position. In Dechloromonas aromatica (strain RCB), this protein is 1,4-alpha-glucan branching enzyme GlgB.